Consider the following 261-residue polypeptide: uncharacterized protein (261 aa).

It localises to the plastid. The protein localises to the chloroplast. This is an uncharacterized protein from Mesostigma viride (Green alga).